Reading from the N-terminus, the 257-residue chain is MSKTAIITGAAGGLGKGIAERLANDGFNIVLQDINEALLLETEKEFKEKGYQAVAYKSDVSKKKEQEELVQFAVTEFGQLDVMVNNAGVDAVTPILEIGEEELSKLFNINVFGTLFGIQAAANQFIKQKSKGKIINACSIAGHESYEVLGTYSATKHSVRSFTQTAAKELADKGITVNAYCPGVAKTEMWDRIDEEMVKLDDSLEIGDAFEAFSSEIKLGRYQEPSDVANLVSFLASNDSDYITGQSILTDGGLVYR.

An NAD(+)-binding site is contributed by 6–30 (IITGAAGGLGKGIAERLANDGFNIV). S139 provides a ligand contact to substrate. The Proton acceptor role is filled by Y152. K156 is a catalytic residue.

It belongs to the short-chain dehydrogenases/reductases (SDR) family.

It catalyses the reaction (S)-acetoin + NAD(+) = diacetyl + NADH + H(+). Functionally, catalyzes the irreversible reduction of 2,3-butanediol to (S)-acetoin in the presence of NADH. In Staphylococcus epidermidis (strain ATCC 12228 / FDA PCI 1200), this protein is Diacetyl reductase [(S)-acetoin forming] (butA).